The sequence spans 637 residues: GTPase-activating protein GYP1 (637 aa).

Basic and acidic residues predominate over residues methionine 1–serine 17. Disordered stretches follow at residues methionine 1 to tyrosine 152 and arginine 187 to lysine 233. Residues aspartate 18–methionine 27 are compositionally biased toward polar residues. A compositionally biased stretch (low complexity) spans lysine 28–lysine 45. A compositionally biased stretch (polar residues) spans methionine 46–alanine 59. Serine 69 bears the Phosphoserine mark. 2 stretches are compositionally biased toward polar residues: residues glutamine 79–serine 91 and proline 98–serine 107. A compositionally biased stretch (basic residues) spans arginine 115–proline 127. Low complexity-rich tracts occupy residues arginine 128–serine 142 and arginine 187–serine 207. Over residues alanine 208–glutamine 223 the composition is skewed to polar residues. Serine 250 is subject to Phosphoserine. Residues glycine 280–threonine 508 enclose the Rab-GAP TBC domain. The disordered stretch occupies residues aspartate 543–glycine 564.

Its subcellular location is the golgi apparatus. The protein resides in the golgi stack. Its function is as follows. GTPase-activating protein (GAP) that stimulates specifically the intrinsic GTPase activity of Ypt/Rab-type GTPases YPT1 and YPT7. Functions on the Golgi as a negative regulator of YPT1. Functions on the vacuole as a negative regulator of YPT7. It is also active on SEC4 and YPT51. Provides a catalytic arginine (arginine finger) and glutamine (glutamine finger) in trans to accelerate the GTP hydrolysis rate of the substrate GTPase. This chain is GTPase-activating protein GYP1 (GYP1), found in Saccharomyces cerevisiae (strain ATCC 204508 / S288c) (Baker's yeast).